The primary structure comprises 118 residues: uncharacterized protein (118 aa).

Positions 1-118 (MASARGAKQS…AARQNEKTAR (118 aa)) are disordered. The segment covering 13–28 (RVGTTRYTETSTVRVE) has biased composition (low complexity). Positions 29 to 49 (TSSHRVETSSRRVETSQRRSE) are enriched in basic and acidic residues.

This is an uncharacterized protein from Homo sapiens (Human).